Consider the following 530-residue polypeptide: T-complex protein 1 subunit zeta-2 (530 aa).

Belongs to the TCP-1 chaperonin family. Component of the chaperonin-containing T-complex (TRiC), a heterooligomeric complex of about 850 to 900 kDa that forms two stacked rings, 12 to 16 nm in diameter. In terms of tissue distribution, testis-specific.

Its subcellular location is the cytoplasm. In terms of biological role, component of the chaperonin-containing T-complex (TRiC), a molecular chaperone complex that assists the folding of proteins upon ATP hydrolysis. In Homo sapiens (Human), this protein is T-complex protein 1 subunit zeta-2 (CCT6B).